A 545-amino-acid polypeptide reads, in one-letter code: CTP synthase (545 aa).

The tract at residues M1–L266 is amidoligase domain. S14 is a binding site for CTP. S14 contacts UTP. Residues S15–I20 and D72 each bind ATP. Mg(2+) is bound by residues D72 and E140. CTP is bound by residues D147–E149, K187–Q192, and K223. Residues K187–Q192 and K223 contribute to the UTP site. K239–V241 is a binding site for ATP. Residues T291–R542 enclose the Glutamine amidotransferase type-1 domain. G352 is a binding site for L-glutamine. Catalysis depends on C379, which acts as the Nucleophile; for glutamine hydrolysis. L-glutamine-binding positions include L380–Q383, E403, and R470. Active-site residues include H515 and E517.

Belongs to the CTP synthase family. Homotetramer.

The catalysed reaction is UTP + L-glutamine + ATP + H2O = CTP + L-glutamate + ADP + phosphate + 2 H(+). The enzyme catalyses L-glutamine + H2O = L-glutamate + NH4(+). It catalyses the reaction UTP + NH4(+) + ATP = CTP + ADP + phosphate + 2 H(+). It participates in pyrimidine metabolism; CTP biosynthesis via de novo pathway; CTP from UDP: step 2/2. With respect to regulation, allosterically activated by GTP, when glutamine is the substrate; GTP has no effect on the reaction when ammonia is the substrate. The allosteric effector GTP functions by stabilizing the protein conformation that binds the tetrahedral intermediate(s) formed during glutamine hydrolysis. Inhibited by the product CTP, via allosteric rather than competitive inhibition. Catalyzes the ATP-dependent amination of UTP to CTP with either L-glutamine or ammonia as the source of nitrogen. Regulates intracellular CTP levels through interactions with the four ribonucleotide triphosphates. The chain is CTP synthase from Salmonella paratyphi A (strain ATCC 9150 / SARB42).